Here is a 238-residue protein sequence, read N- to C-terminus: Probable transcriptional regulatory protein VPA0011 (238 aa).

Belongs to the TACO1 family.

The protein resides in the cytoplasm. The polypeptide is Probable transcriptional regulatory protein VPA0011 (Vibrio parahaemolyticus serotype O3:K6 (strain RIMD 2210633)).